Consider the following 398-residue polypeptide: Lysophosphatidylserine lipase ABHD12 (398 aa).

Over residues 1–15 (MRKRTEPVTLEHERC) the composition is skewed to basic and acidic residues. A disordered region spans residues 1–24 (MRKRTEPVTLEHERCAASGSSSSG). Topologically, residues 1–74 (MRKRTEPVTL…RKSLWFRLRK (74 aa)) are cytoplasmic. Residues 75 to 95 (ILLCVLGFYIAIPFLVKLCPG) traverse the membrane as a helical segment. The Extracellular portion of the chain corresponds to 96–398 (IQAKLIFLNF…LGKSEPERQH (303 aa)). Asn-123 carries an N-linked (GlcNAc...) asparagine glycan. Ser-246 serves as the catalytic Nucleophile. Active-site charge relay system residues include Asp-333 and His-372.

This sequence belongs to the serine esterase family. In terms of processing, glycosylated.

It localises to the endoplasmic reticulum membrane. Its subcellular location is the mitochondrion. It carries out the reaction 1-(9Z-octadecenoyl)-sn-glycero-3-phospho-L-serine + H2O = sn-glycero-3-phospho-L-serine + (9Z)-octadecenoate + H(+). The catalysed reaction is 1-(9Z-octadecenoyl)-sn-glycero-3-phospho-(1'-sn-glycerol) + H2O = sn-glycero-3-phospho-(1'-sn-glycerol) + (9Z)-octadecenoate + H(+). The enzyme catalyses 1-(9Z-octadecenoyl)-sn-glycero-3-phospho-(1D-myo-inositol) + H2O = sn-glycero-3-phospho-1D-myo-inositol + (9Z)-octadecenoate + H(+). It catalyses the reaction 1-(9Z-octadecenoyl)-sn-glycero-3-phosphoethanolamine + H2O = sn-glycero-3-phosphoethanolamine + (9Z)-octadecenoate + H(+). It carries out the reaction 1-(9Z-octadecenoyl)-sn-glycero-3-phosphocholine + H2O = 1-(9Z-octadecenoyl)-sn-glycerol + phosphocholine + H(+). The catalysed reaction is 2-(9Z-octadecenoyl)-glycerol + H2O = glycerol + (9Z)-octadecenoate + H(+). The enzyme catalyses 1-hexadecanoyl-sn-glycero-3-phospho-L-serine + H2O = sn-glycero-3-phospho-L-serine + hexadecanoate + H(+). It catalyses the reaction 2-(5Z,8Z,11Z,14Z-eicosatetraenoyl)-glycerol + H2O = glycerol + (5Z,8Z,11Z,14Z)-eicosatetraenoate + H(+). It carries out the reaction Hydrolyzes glycerol monoesters of long-chain fatty acids.. The catalysed reaction is 1-decanoylglycerol + H2O = decanoate + glycerol + H(+). The enzyme catalyses 1-dodecanoylglycerol + H2O = dodecanoate + glycerol + H(+). It catalyses the reaction 1-tetradecanoylglycerol + H2O = tetradecanoate + glycerol + H(+). It carries out the reaction 2-hexadecanoylglycerol + H2O = glycerol + hexadecanoate + H(+). The catalysed reaction is 1-(9Z-octadecenoyl)-glycerol + H2O = glycerol + (9Z)-octadecenoate + H(+). The enzyme catalyses 2-(9Z,12Z-octadecadienoyl)-glycerol + H2O = (9Z,12Z)-octadecadienoate + glycerol + H(+). It catalyses the reaction 1-(5Z,8Z,11Z,14Z-eicosatetraenoyl)-glycerol + H2O = glycerol + (5Z,8Z,11Z,14Z)-eicosatetraenoate + H(+). It carries out the reaction 1-(9Z,12Z-octadecadienoyl)-glycerol + H2O = (9Z,12Z)-octadecadienoate + glycerol + H(+). The catalysed reaction is 1-hexadecanoylglycerol + H2O = glycerol + hexadecanoate + H(+). The enzyme catalyses 1-octadecanoylglycerol + H2O = octadecanoate + glycerol + H(+). It catalyses the reaction 1-octadecanoyl-2-(9,10-epoxyoctadecanoyl)-sn-glycero-3-phospho-L-serine + H2O = 9,10-epoxyoctadecanoate + 1-octadecanoyl-sn-glycero-3-phosphoserine + H(+). It carries out the reaction 1-octadecanoyl-2-(10-hydroxyoctadecanoyl)-sn-glycero-3-phospho-L-serine + H2O = 1-octadecanoyl-sn-glycero-3-phosphoserine + 10-hydroxyoctadecanoate + H(+). The catalysed reaction is 1-hexadecanoyl-2-(10-hydroxyoctadecanoyl)-sn-glycero-3-phospho-L-serine + H2O = 10-hydroxyoctadecanoate + 1-hexadecanoyl-sn-glycero-3-phospho-L-serine + H(+). Its activity is regulated as follows. Selectively inhibited by DO264 (N-3-pyridyl-N'-(1-[3-chloro-4-{2-chloro-4-(trifluoromethoxy)phenoxy}pyridine-2-yl]piperidin-4-yl)thiourea). Functionally, lysophosphatidylserine (LPS) lipase that mediates the hydrolysis of lysophosphatidylserine, a class of signaling lipids that regulates immunological and neurological processes. Represents a major lysophosphatidylserine lipase in the brain, thereby playing a key role in the central nervous system. Also able to hydrolyze oxidized phosphatidylserine; oxidized phosphatidylserine is produced in response to severe inflammatory stress and constitutes a proapoptotic 'eat me' signal. Also has monoacylglycerol (MAG) lipase activity: hydrolyzes 2-arachidonoylglycerol (2-AG), thereby acting as a regulator of endocannabinoid signaling pathways. Has a strong preference for very-long-chain lipid substrates; substrate specificity is likely due to improved catalysis and not improved substrate binding. The chain is Lysophosphatidylserine lipase ABHD12 from Mus musculus (Mouse).